An 84-amino-acid chain; its full sequence is Small ribosomal subunit protein bS20 (84 aa).

The protein belongs to the bacterial ribosomal protein bS20 family.

Functionally, binds directly to 16S ribosomal RNA. This Porphyromonas gingivalis (strain ATCC 33277 / DSM 20709 / CIP 103683 / JCM 12257 / NCTC 11834 / 2561) protein is Small ribosomal subunit protein bS20.